The chain runs to 164 residues: Single-stranded DNA-binding protein 2 (164 aa).

Positions 5–109 (INKVILVGNL…IVADEMQMLG (105 aa)) constitute an SSB domain. The disordered stretch occupies residues 105–164 (MQMLGGRSDGGGMGGGGERPQRQTSQRQDYAPRRQARQPSQSPQSSPPPMDDFADDDIPF). A compositionally biased stretch (gly residues) spans 111-122 (RSDGGGMGGGGE). An Important for interaction with partner proteins motif is present at residues 159–164 (DDDIPF).

In terms of assembly, homotetramer.

Functionally, plays an important role in DNA replication, recombination and repair. Binds to ssDNA and to an array of partner proteins to recruit them to their sites of action during DNA metabolism. This is Single-stranded DNA-binding protein 2 (ssb2) from Xylella fastidiosa (strain 9a5c).